Here is a 253-residue protein sequence, read N- to C-terminus: HTH-type transcriptional regulator YdeO (253 aa).

An HTH araC/xylS-type domain is found at 137–233; that stretch reads GKVRNIVNMK…GNSPKRVSKE (97 aa). 2 DNA-binding regions (H-T-H motif) span residues 154-175 and 200-223; these read KDIC…KQEQ and VNKI…RKHF.

In terms of biological role, induces the expression of gadE and mdtEF. Could also regulate the expression of other genes involved in acid resistance. The protein is HTH-type transcriptional regulator YdeO (ydeO) of Escherichia coli (strain K12).